The following is a 58-amino-acid chain: MKQSEFRRWLKAQGAEFKDGTNHLKVFLNGKQTTMPRHPSKEIPEPLRKLILKQPGIK.

The protein belongs to the HicA mRNA interferase family. As to quaternary structure, probably forms a complex with the cognate antitoxin HicB 2 which inhibits the mRNA interferase activity.

Functionally, toxic component of a type II toxin-antitoxin (TA) system. A probable translation-independent mRNA interferase. The polypeptide is Probable mRNA interferase HicA 2 (hicA2) (Photorhabdus laumondii subsp. laumondii (strain DSM 15139 / CIP 105565 / TT01) (Photorhabdus luminescens subsp. laumondii)).